The primary structure comprises 388 residues: P2X purinoceptor 4 (388 aa).

At 1–33 (MTGCCTVLGAFLFEYDTPRIVLIRSRKVGLMNR) the chain is on the cytoplasmic side. The helical transmembrane segment at 34-54 (TVQLLILAYVIGWVFVWEKGY) threads the bilayer. Residues 55–338 (QETDSVVSSV…KFDIIPTMIN (284 aa)) are Extracellular-facing. Positions 67 and 69 each coordinate ATP. The CTP site is built by K67 and K69. N-linked (GlcNAc...) asparagine glycans are attached at residues N75, N110, N131, N153, and N184. 3 cysteine pairs are disulfide-bonded: C116/C165, C126/C149, and C132/C159. Residues T186 and L188 each contribute to the ATP site. Residue T186 participates in CTP binding. N-linked (GlcNAc...) asparagine glycosylation is found at N199 and N208. Cystine bridges form between C217/C227 and C261/C270. ATP-binding residues include N293, R295, and K313. 3 residues coordinate CTP: N293, R295, and K313. Residues 339–359 (IGSGLALLGVATVLCDVIVLY) form a helical membrane-spanning segment. Over 360 to 388 (CMKKRYYYREKKYKYVEDYEQGLGNQMEQ) the chain is Cytoplasmic.

This sequence belongs to the P2X receptor family. In terms of assembly, functional P2RXs are organized as homomeric and heteromeric trimers. Forms heterotrimer with P2RX1. Interacts with P2RX7 (via C-terminus); this interaction is functional only in the presence of ATP. Forms heterotrimer with P2RX4; functional differences between homomeric P2RX4 and P2RX4/6 heterotrimer are minor. Interacts with AP1M2.

It localises to the cell membrane. The protein resides in the lysosome membrane. It catalyses the reaction K(+)(in) = K(+)(out). It carries out the reaction Na(+)(in) = Na(+)(out). The catalysed reaction is Ca(2+)(in) = Ca(2+)(out). Its activity is regulated as follows. Activated by ATP. pH-dependent and inhibited by acidic pH. Its function is as follows. ATP-gated nonselective transmembrane cation channel permeable to potassium, sodium and calcium. CTP, but not GTP or UTP, functions as a weak affinity agonist for P2RX4. Activated by extracellularly released ATP, it plays multiple role in immunity and central nervous system physiology. Could also function as an ATP-gated cation channel of lysosomal membranes. The polypeptide is P2X purinoceptor 4 (P2RX4) (Bos taurus (Bovine)).